The primary structure comprises 161 residues: Cystatin cpi-2 (161 aa).

The first 25 residues, 1–25, serve as a signal peptide directing secretion; it reads MMSTMSIKEGLLVILLSLFLFDTTA. The Important for interaction with host LGMN signature appears at 76–78; sequence SND. N-linked (GlcNAc...) asparagine glycosylation occurs at asparagine 89. The Secondary area of contact signature appears at 93-97; it reads QVVAG. Cysteine 111 and cysteine 124 form a disulfide bridge.

Belongs to the cystatin family.

Its function is as follows. Cysteine protease inhibitor which inhibits members of the peptidase C1 family. Also acts as an asparaginyl endopeptidase inhibitor. In the human host, inhibits CTSL/cathepsin L, CTSS/cathepsin S, CTSB/cathepsin B and asparaginyl endopeptidase LGMN/AEP which may cause defects in both antigen and MHC class II invariant chain CD74/Ii processing. The sequence is that of Cystatin cpi-2 from Brugia malayi (Filarial nematode worm).